The following is a 391-amino-acid chain: Phosphoglycerate kinase (391 aa).

Substrate contacts are provided by residues 21-23, Arg36, 59-62, Arg113, and Arg146; these read DLN and HLGR. Residues Lys197, Glu319, and 345-348 each bind ATP; that span reads GGDT.

This sequence belongs to the phosphoglycerate kinase family. As to quaternary structure, monomer.

The protein localises to the cytoplasm. It catalyses the reaction (2R)-3-phosphoglycerate + ATP = (2R)-3-phospho-glyceroyl phosphate + ADP. It functions in the pathway carbohydrate degradation; glycolysis; pyruvate from D-glyceraldehyde 3-phosphate: step 2/5. The protein is Phosphoglycerate kinase of Shewanella frigidimarina (strain NCIMB 400).